The sequence spans 289 residues: MAPKKRSSRGTRTNTLRSRKLASFLKDFDREVQVRTKQIESDRQTLLKEVENLYNIEILRLPKALQGMKWLDYFALGGNKQALEEAAKADRDITEINNLTAEAIQTPLKSVKKRKVIEVEESIKEEEEEEEEGGGGGGRTKKSHKNLRSAKVKRCLPSKKRTQSIQGRGRSKRLSHDFVTPAMSRLEPSLVKPTPGMTPRFDSRVFKTPGLRTPAAKEQVYNISINGSPLADSKEISLSVPIGGGASLRLLASDLQRIDIAQLNPEALGNIRKLSSRLAQICSSIRTGR.

Residues 1–58 (MAPKKRSSRGTRTNTLRSRKLASFLKDFDREVQVRTKQIESDRQTLLKEVENLYNIEI) form a required for interaction with INCENP region. Residues 1 to 88 (MAPKKRSSRG…NKQALEEAAK (88 aa)) are required for centromere localization. A required for interaction with SENP3 region spans residues 1–150 (MAPKKRSSRG…KKSHKNLRSA (150 aa)). Residues 10-109 (GTRTNTLRSR…TAEAIQTPLK (100 aa)) are required to form a minimal CPC core complex that localizes to the central spindle and midbody and properly executes the role of the CPC during cytokinesis. The tract at residues 20-78 (KLASFLKDFDREVQVRTKQIESDRQTLLKEVENLYNIEILRLPKALQGMKWLDYFALGG) is required for interaction with INCENP and BIRC5. Citrulline is present on Arg91. Thr94 is modified (phosphothreonine; by TTK). The residue at position 106 (Thr106) is a Phosphothreonine. A Phosphoserine modification is found at Ser110. The interval 122–173 (SIKEEEEEEEEGGGGGGRTKKSHKNLRSAKVKRCLPSKKRTQSIQGRGRSKR) is disordered. Positions 123-133 (IKEEEEEEEEG) are enriched in acidic residues. The segment covering 139 to 162 (RTKKSHKNLRSAKVKRCLPSKKRT) has biased composition (basic residues). Lys145 is covalently cross-linked (Glycyl lysine isopeptide (Lys-Gly) (interchain with G-Cter in SUMO2)). Ser175 carries the phosphoserine modification. Residues Thr198 and Thr213 each carry the phosphothreonine modification. Phosphoserine is present on residues Ser228, Ser233, Ser247, and Ser253.

Belongs to the borealin family. In terms of assembly, may form homooligomers and homodimers. Component of the chromosomal passenger complex (CPC) composed of at least BIRC5/survivin, CDCA8/borealin, INCENP, AURKB or AURKC; in the complex forms a triple-helix bundle-based subcomplex with INCENP and BIRC5. Interacts with SENP3, UBE2I and RANBP2. Interacts (phosphorylated) with SGO1 and SGO2A; the association is dependent on CDK1. In terms of processing, phosphorylated by TTK, essentially at Thr-94. Phosphorylation (probably by CDK1) promotes targeting of the CPC to centromeric DNA. Post-translationally, sumoylated by UBE2I and RANBP2. Desumoylated by SENP3 through the removal of SUMO2 and SUMO3. Citrullinated by PADI4.

Its subcellular location is the nucleus. It localises to the nucleolus. It is found in the cytoplasm. The protein localises to the chromosome. The protein resides in the centromere. Its subcellular location is the cytoskeleton. It localises to the spindle. Component of the chromosomal passenger complex (CPC), a complex that acts as a key regulator of mitosis. The CPC complex has essential functions at the centromere in ensuring correct chromosome alignment and segregation and is required for chromatin-induced microtubule stabilization and spindle assembly. In the complex, it may be required to direct the CPC to centromeric DNA. Major effector of the TTK kinase in the control of attachment-error-correction and chromosome alignment. This chain is Borealin (Cdca8), found in Mus musculus (Mouse).